We begin with the raw amino-acid sequence, 882 residues long: Translation initiation factor IF-2 (882 aa).

2 disordered regions span residues 67-202 (KTVS…EKAR) and 223-278 (ERYG…KHMK). Composition is skewed to basic and acidic residues over residues 95-152 (VKRD…EAKA) and 161-202 (EQPK…EKAR). Residues 251–264 (GRRNRNKTQTKSKR) are compositionally biased toward basic residues. The span at 265–274 (GGKDAREGRE) shows a compositional bias: basic and acidic residues. One can recognise a tr-type G domain in the interval 382 to 551 (PRAPVVTIMG…LLQAEVLELK (170 aa)). Residues 391–398 (GHVDHGKT) form a G1 region. Position 391-398 (391-398 (GHVDHGKT)) interacts with GTP. The interval 416-420 (GITQH) is G2. The tract at residues 437–440 (DTPG) is G3. GTP contacts are provided by residues 437-441 (DTPGH) and 491-494 (NKMD). The G4 stretch occupies residues 491-494 (NKMD). Positions 527 to 529 (SAK) are G5.

The protein belongs to the TRAFAC class translation factor GTPase superfamily. Classic translation factor GTPase family. IF-2 subfamily.

It localises to the cytoplasm. Functionally, one of the essential components for the initiation of protein synthesis. Protects formylmethionyl-tRNA from spontaneous hydrolysis and promotes its binding to the 30S ribosomal subunits. Also involved in the hydrolysis of GTP during the formation of the 70S ribosomal complex. This Shewanella amazonensis (strain ATCC BAA-1098 / SB2B) protein is Translation initiation factor IF-2.